The following is a 316-amino-acid chain: Olfactory receptor 8J1 (316 aa).

Over Met1–Ile25 the chain is Extracellular. A glycan (N-linked (GlcNAc...) asparagine) is linked at Asn5. Residues Pro26–Ile46 form a helical membrane-spanning segment. Residues Thr47 to Arg54 lie on the Cytoplasmic side of the membrane. Residues Leu55–Thr75 form a helical membrane-spanning segment. Residues Val76–Thr99 lie on the Extracellular side of the membrane. A disulfide bond links Cys97 and Cys189. The chain crosses the membrane as a helical span at residues Gln100–Tyr120. Residues Asp121–Arg139 lie on the Cytoplasmic side of the membrane. Residues Leu140–Ser160 form a helical membrane-spanning segment. At Ser161–Thr197 the chain is on the extracellular side. The chain crosses the membrane as a helical span at residues Val198–Ser217. The Cytoplasmic portion of the chain corresponds to Tyr218–Ala237. Residues Phe238 to Met258 form a helical membrane-spanning segment. The Extracellular segment spans residues Tyr259–Asp272. A helical transmembrane segment spans residues Lys273–Leu293. Topologically, residues Arg294–Met316 are cytoplasmic.

The protein belongs to the G-protein coupled receptor 1 family.

It is found in the cell membrane. Functionally, odorant receptor. The protein is Olfactory receptor 8J1 (OR8J1) of Homo sapiens (Human).